We begin with the raw amino-acid sequence, 150 residues long: Plasmin C (150 aa).

A signal peptide spans 1–14; sequence MRSFFLLCALVAVC.

This is Plasmin C (PLSC) from Physarum polycephalum (Slime mold).